Consider the following 403-residue polypeptide: Sulfate adenylyltransferase (403 aa).

Belongs to the sulfate adenylyltransferase family.

It carries out the reaction sulfate + ATP + H(+) = adenosine 5'-phosphosulfate + diphosphate. It participates in sulfur metabolism; hydrogen sulfide biosynthesis; sulfite from sulfate: step 1/3. The sequence is that of Sulfate adenylyltransferase from Pelodictyon phaeoclathratiforme (strain DSM 5477 / BU-1).